Consider the following 106-residue polypeptide: uncharacterized protein (106 aa).

A helical membrane pass occupies residues 85 to 101; that stretch reads AVALVLLCVSHHLTYLP.

The protein resides in the membrane. This is an uncharacterized protein from Saccharomyces cerevisiae (strain ATCC 204508 / S288c) (Baker's yeast).